The sequence spans 222 residues: Cytochrome b6 (222 aa).

A helical membrane pass occupies residues 39–59 (IFYCLGGITLVCFLVQFATGF). C42 lines the heme c pocket. The heme b site is built by H93 and H107. Helical transmembrane passes span 97 to 117 (ASMMVLMMILHVFRVYLTGGF), 123 to 143 (LTWMTGVILAVITVSFGVTGY), and 193 to 213 (LHTFVFPWLIAVFMLAHFLMI). H194 and H209 together coordinate heme b.

This sequence belongs to the cytochrome b family. PetB subfamily. As to quaternary structure, the 4 large subunits of the cytochrome b6-f complex are cytochrome b6, subunit IV (17 kDa polypeptide, PetD), cytochrome f and the Rieske protein, while the 4 small subunits are PetG, PetL, PetM and PetN. The complex functions as a dimer. Heme b is required as a cofactor. Heme c serves as cofactor.

The protein localises to the cellular thylakoid membrane. Its function is as follows. Component of the cytochrome b6-f complex, which mediates electron transfer between photosystem II (PSII) and photosystem I (PSI), cyclic electron flow around PSI, and state transitions. The protein is Cytochrome b6 of Crocosphaera subtropica (strain ATCC 51142 / BH68) (Cyanothece sp. (strain ATCC 51142)).